Consider the following 158-residue polypeptide: Ribonuclease H (158 aa).

In terms of domain architecture, RNase H type-1 spans 3–144 (ELKLIHIFTD…CDQLARAAAE (142 aa)). Residues Asp12, Glu50, Asp72, and Asp136 each coordinate Mg(2+). Residues 137-158 (QLARAAAEASPTQVDEGYQPES) are disordered.

It belongs to the RNase H family. As to quaternary structure, monomer. It depends on Mg(2+) as a cofactor.

It is found in the cytoplasm. It catalyses the reaction Endonucleolytic cleavage to 5'-phosphomonoester.. Functionally, endonuclease that specifically degrades the RNA of RNA-DNA hybrids. This Shewanella sp. (strain ANA-3) protein is Ribonuclease H.